The chain runs to 290 residues: Acetyl-coenzyme A carboxylase carboxyl transferase subunit beta (290 aa).

Residues 28 to 290 (IMTKCPKCKK…TGGDIEWLQD (263 aa)) form the CoA carboxyltransferase N-terminal domain. Cys-32, Cys-35, Cys-51, and Cys-54 together coordinate Zn(2+). A C4-type zinc finger spans residues 32–54 (CPKCKKIMLTKELDKNMRVCMNC).

It belongs to the AccD/PCCB family. In terms of assembly, acetyl-CoA carboxylase is a heterohexamer composed of biotin carboxyl carrier protein (AccB), biotin carboxylase (AccC) and two subunits each of ACCase subunit alpha (AccA) and ACCase subunit beta (AccD). Zn(2+) is required as a cofactor.

The protein localises to the cytoplasm. It carries out the reaction N(6)-carboxybiotinyl-L-lysyl-[protein] + acetyl-CoA = N(6)-biotinyl-L-lysyl-[protein] + malonyl-CoA. It participates in lipid metabolism; malonyl-CoA biosynthesis; malonyl-CoA from acetyl-CoA: step 1/1. Inhibited by pyrrolidine dione antibiotics moiramide B (CPD1) and CPD2. Functionally, component of the acetyl coenzyme A carboxylase (ACC) complex. Biotin carboxylase (BC) catalyzes the carboxylation of biotin on its carrier protein (BCCP) and then the CO(2) group is transferred by the transcarboxylase to acetyl-CoA to form malonyl-CoA. This is Acetyl-coenzyme A carboxylase carboxyl transferase subunit beta from Bacillus subtilis (strain 168).